We begin with the raw amino-acid sequence, 207 residues long: NAD(P)H-quinone oxidoreductase subunit K, chloroplastic (207 aa).

4 residues coordinate [4Fe-4S] cluster: Cys47, Cys48, Cys112, and Cys143.

The protein belongs to the complex I 20 kDa subunit family. In terms of assembly, NDH is composed of at least 16 different subunits, 5 of which are encoded in the nucleus. The cofactor is [4Fe-4S] cluster.

The protein resides in the plastid. It is found in the chloroplast thylakoid membrane. The enzyme catalyses a plastoquinone + NADH + (n+1) H(+)(in) = a plastoquinol + NAD(+) + n H(+)(out). It catalyses the reaction a plastoquinone + NADPH + (n+1) H(+)(in) = a plastoquinol + NADP(+) + n H(+)(out). In terms of biological role, NDH shuttles electrons from NAD(P)H:plastoquinone, via FMN and iron-sulfur (Fe-S) centers, to quinones in the photosynthetic chain and possibly in a chloroplast respiratory chain. The immediate electron acceptor for the enzyme in this species is believed to be plastoquinone. Couples the redox reaction to proton translocation, and thus conserves the redox energy in a proton gradient. This is NAD(P)H-quinone oxidoreductase subunit K, chloroplastic from Psilotum nudum (Whisk fern).